Consider the following 426-residue polypeptide: 3-phosphoshikimate 1-carboxyvinyltransferase (426 aa).

The 3-phosphoshikimate site is built by Lys22, Ser23, and Arg27. Lys22 is a binding site for phosphoenolpyruvate. Phosphoenolpyruvate contacts are provided by Gly96 and Arg124. The 3-phosphoshikimate site is built by Ser170, Ser171, Gln172, Ser198, Asp314, Asn337, and Lys341. Residue Gln172 participates in phosphoenolpyruvate binding. The Proton acceptor role is filled by Asp314. Phosphoenolpyruvate contacts are provided by Arg345, Arg387, and Lys412.

This sequence belongs to the EPSP synthase family. Monomer.

It localises to the cytoplasm. It catalyses the reaction 3-phosphoshikimate + phosphoenolpyruvate = 5-O-(1-carboxyvinyl)-3-phosphoshikimate + phosphate. It functions in the pathway metabolic intermediate biosynthesis; chorismate biosynthesis; chorismate from D-erythrose 4-phosphate and phosphoenolpyruvate: step 6/7. Its function is as follows. Catalyzes the transfer of the enolpyruvyl moiety of phosphoenolpyruvate (PEP) to the 5-hydroxyl of shikimate-3-phosphate (S3P) to produce enolpyruvyl shikimate-3-phosphate and inorganic phosphate. The polypeptide is 3-phosphoshikimate 1-carboxyvinyltransferase (Vibrio atlanticus (strain LGP32) (Vibrio splendidus (strain Mel32))).